Here is a 101-residue protein sequence, read N- to C-terminus: Small ribosomal subunit protein uS14 (101 aa).

This sequence belongs to the universal ribosomal protein uS14 family. As to quaternary structure, part of the 30S ribosomal subunit. Contacts proteins S3 and S10.

Functionally, binds 16S rRNA, required for the assembly of 30S particles and may also be responsible for determining the conformation of the 16S rRNA at the A site. This Shewanella putrefaciens (strain CN-32 / ATCC BAA-453) protein is Small ribosomal subunit protein uS14.